Reading from the N-terminus, the 129-residue chain is Phosphoribosyl-AMP cyclohydrolase (129 aa).

Residue Asp-84 coordinates Mg(2+). Residue Cys-85 coordinates Zn(2+). Mg(2+) is bound by residues Asp-86 and Asp-88. Residues Cys-101 and Cys-108 each coordinate Zn(2+).

It belongs to the PRA-CH family. As to quaternary structure, homodimer. Requires Mg(2+) as cofactor. Zn(2+) serves as cofactor.

The protein resides in the cytoplasm. It carries out the reaction 1-(5-phospho-beta-D-ribosyl)-5'-AMP + H2O = 1-(5-phospho-beta-D-ribosyl)-5-[(5-phospho-beta-D-ribosylamino)methylideneamino]imidazole-4-carboxamide. The protein operates within amino-acid biosynthesis; L-histidine biosynthesis; L-histidine from 5-phospho-alpha-D-ribose 1-diphosphate: step 3/9. Its function is as follows. Catalyzes the hydrolysis of the adenine ring of phosphoribosyl-AMP. In Halobacterium salinarum (strain ATCC 700922 / JCM 11081 / NRC-1) (Halobacterium halobium), this protein is Phosphoribosyl-AMP cyclohydrolase.